We begin with the raw amino-acid sequence, 288 residues long: POU domain class 2-associating factor 2 (288 aa).

The 23-residue stretch at 10–32 folds into the OCA domain; the sequence is KRVYQGVRVKHTVKDLLAEKRSG. 2 disordered regions span residues 24–52 and 247–274; these read DLLA…PFVQ and PPKV…VKED. A compositionally biased stretch (low complexity) spans 35–48; that stretch reads SNSRLNGSVSSSQS.

Belongs to the POU2AF family. As to quaternary structure, interacts with POU2F3 (via the POU domain) in a DNA-dependent manner; this interaction recruits POU2AF2 to chromatin and increases POU2F3 transactivation activity. Expressed in tuft cells of colon mucosa, as well as in small intestine and thymus.

The protein resides in the cytoplasm. Its subcellular location is the cytosol. It localises to the nucleus. Its function is as follows. Transcriptional coactivator of POU2F3. This complex drives the development of tuft cells, a rare chemosensory cells that coordinate immune and neural functions within mucosal epithelial tissues. The sequence is that of POU domain class 2-associating factor 2 from Homo sapiens (Human).